A 1531-amino-acid polypeptide reads, in one-letter code: Lysophospholipase nte1 (1531 aa).

The Cytoplasmic segment spans residues 1 to 72 (MATGDGIIAA…TPPAPSTMVG (72 aa)). The chain crosses the membrane as a helical span at residues 73–93 (WIGWIFSFIFQVIPSVLYWIV). Topologically, residues 94 to 115 (TFTTITLPTWLFTLFSMSLTFT) are lumenal. The helical transmembrane segment at 116–136 (MNFTTLLLIALAVVSTISWFI) threads the bilayer. Over 137–1531 (RYRFLNMYSR…RTLAPRRASI (1395 aa)) the chain is Cytoplasmic. Disordered regions lie at residues 242-265 (GSDEELNRMAGESSDEDDHRPDGR), 303-385 (ASSA…TRRK), and 766-789 (NTSSSRVSGSAAAANDPRRKKQSR). The span at 325 to 343 (REMDDSPHVYQGDRLDPAS) shows a compositional bias: basic and acidic residues. Residues 689-809 (GGTS…AVAS) and 849-969 (RLTS…IAQR) contribute to the a nucleoside 3',5'-cyclic phosphate site. A compositionally biased stretch (low complexity) spans 768-779 (SSSRVSGSAAAA). The 165-residue stretch at 1228–1392 (LVLGGGGARG…IDNLTVDHMK (165 aa)) folds into the PNPLA domain. A GXGXXG motif is present at residues 1232–1237 (GGGARG). Residues 1259 to 1263 (GTSIG) carry the GXSXG motif. The Nucleophile role is filled by Ser-1261. The active-site Proton acceptor is the Asp-1379. A DGA/G motif is present at residues 1379–1381 (DGG). The interval 1510–1531 (LPEETEEKKKLQRTLAPRRASI) is disordered.

The protein belongs to the NTE family.

Its subcellular location is the endoplasmic reticulum membrane. The enzyme catalyses a 1-acyl-sn-glycero-3-phosphocholine + H2O = sn-glycerol 3-phosphocholine + a fatty acid + H(+). With respect to regulation, inhibited by organophosphorus esters. Intracellular phospholipase B that catalyzes the double deacylation of phosphatidylcholine (PC) to glycerophosphocholine (GroPCho). Plays an important role in membrane lipid homeostasis. Responsible for the rapid PC turnover in response to inositol, elevated temperatures, or when choline is present in the growth medium. In Aspergillus niger (strain ATCC MYA-4892 / CBS 513.88 / FGSC A1513), this protein is Lysophospholipase nte1 (nte1).